Here is a 544-residue protein sequence, read N- to C-terminus: MIASGPPPRVYWTSLIFLLLACCLLPTGAQGQTYQVRVEPKDPVVPFGEPLVVNCTLDCPGPGLISLETALSKEPHSRGLGWAAFRLTNVTGDMEILCSGICNKSQVVGFSNITVFGFPKRVELAPLPLWQPVGEELNLSCLVSGGAPRAHLSVVLLRGEEELGRQPLGKEEPAKVTFMVQPRREDHGTNFSCRSELDLRSQGLELFQNTSAPRKLQTYAMPKTAPRLVFPRFWEMETSWPVNCSLNGLFPASEAHIQLALGNQMLNATVVSHADTLTATATAKTEQEGTQEIVCNVTLGVENRETRESLVAYRFQGPNLNLSESNATEGTPVTVTCAAGPQVQVMLDGVPAAVPGQPAQLQLKATEMDDRRTFFCNATLKVHGVTLHRNRSIQLRVLYGPTIDRAKCPQRLMWKEKTMHILQCQARGNPNPQLQCLREGSKFKVPVGIPFLVLLNYSGTYSCQAASSRGTDKMLVMMDVQGRNPVTINIVLGVLAILGLVTLAAASVYVFWVQRQHDIYHLTPRSTRWRLTSTQPVTVAEELS.

Positions 1–31 (MIASGPPPRVYWTSLIFLLLACCLLPTGAQG) are cleaved as a signal peptide. At 32-486 (QTYQVRVEPK…MMDVQGRNPV (455 aa)) the chain is on the extracellular side. The Ig-like C2-type 1 domain occupies 48 to 105 (GEPLVVNCTLDCPGPGLISLETALSKEPHSRGLGWAAFRLTNVTGDMEILCSGICNKS). N-linked (GlcNAc...) asparagine glycosylation is found at Asn-54, Asn-89, Asn-103, Asn-112, Asn-138, Asn-190, Asn-209, Asn-243, Asn-267, Asn-296, Asn-321, and Asn-326. Disulfide bonds link Cys-55–Cys-98 and Cys-59–Cys-102. Positions 134 to 200 (GEELNLSCLV…FSCRSELDLR (67 aa)) constitute an Ig-like C2-type 2 domain. A disulfide bond links Cys-141 and Cys-193. Residues 237-302 (ETSWPVNCSL…IVCNVTLGVE (66 aa)) enclose the Ig-like C2-type 3 domain. Cysteines 244 and 295 form a disulfide. Positions 330 to 383 (GTPVTVTCAAGPQVQVMLDGVPAAVPGQPAQLQLKATEMDDRRTFFCNATLKVH) constitute an Ig-like C2-type 4 domain. Residues Cys-337 and Cys-376 are joined by a disulfide bond. Asn-377, Asn-390, and Asn-456 each carry an N-linked (GlcNAc...) asparagine glycan. The Ig-like C2-type 5 domain maps to 417–470 (KTMHILQCQARGNPNPQLQCLREGSKFKVPVGIPFLVLLNYSGTYSCQAASSRG). A disulfide bridge connects residues Cys-424 and Cys-463. The chain crosses the membrane as a helical span at residues 487–511 (TINIVLGVLAILGLVTLAAASVYVF). The Cytoplasmic portion of the chain corresponds to 512-544 (WVQRQHDIYHLTPRSTRWRLTSTQPVTVAEELS).

This sequence belongs to the immunoglobulin superfamily. ICAM family. In terms of assembly, interacts with moesin/MSN. Leukocytes.

It localises to the membrane. In terms of biological role, ICAM proteins are ligands for the leukocyte adhesion protein LFA-1 (integrin alpha-L/beta-2). ICAM3 is also a ligand for integrin alpha-D/beta-2. In association with integrin alpha-L/beta-2, contributes to apoptotic neutrophil phagocytosis by macrophages. The protein is Intercellular adhesion molecule 3 (ICAM3) of Bos taurus (Bovine).